A 525-amino-acid polypeptide reads, in one-letter code: MSDPVIKRALVSVSDKTGIVDFCRELGAMGVEIFSTGGTLRILQESGIEAASISTITGFPEIMDGRVKTLHPKIHGGLLAVRDNEDHVGQAKANGIEFIDMVVVNLYPFEATVAKPDVTFEEAIENIDIGGPSMLRSAAKNNESVTVVTDSADYATVLDEMRSNNGATRRETRLTLARKVFELTSRYDRAIADYLIGAEESGETEAPAAISVKLEKELDMRYGENPHQSAGFYRLVDGQGSRCFDDFFDKLHGKELSYNNMLDIAAATGLVEEFRGEDPAVVIIKHTNPCGVAQAGTLVDAYRKAFSTDTQSPFGGIIAFNVPLDMETALAVDEIFTEILIAPAYEDGVLDMLMKKKNRRLVLQKKALLQEVMEYKSTQFGMLVQDRDSKIVSREDLKVVTKRQPDEQELDDMMFAWKIAKHVKSNTIVYVKNGQTIGVGAGQMSRIDSAKIARSKAAEAGLDIKGSAVASDAFFPFADGLLAAAEAGATSVIQPGGSIRDDEVIAAADENNLAMVFTSMRHFKH.

The region spanning Met-1–Thr-149 is the MGS-like domain.

Belongs to the PurH family.

It catalyses the reaction (6R)-10-formyltetrahydrofolate + 5-amino-1-(5-phospho-beta-D-ribosyl)imidazole-4-carboxamide = 5-formamido-1-(5-phospho-D-ribosyl)imidazole-4-carboxamide + (6S)-5,6,7,8-tetrahydrofolate. The enzyme catalyses IMP + H2O = 5-formamido-1-(5-phospho-D-ribosyl)imidazole-4-carboxamide. It functions in the pathway purine metabolism; IMP biosynthesis via de novo pathway; 5-formamido-1-(5-phospho-D-ribosyl)imidazole-4-carboxamide from 5-amino-1-(5-phospho-D-ribosyl)imidazole-4-carboxamide (10-formyl THF route): step 1/1. It participates in purine metabolism; IMP biosynthesis via de novo pathway; IMP from 5-formamido-1-(5-phospho-D-ribosyl)imidazole-4-carboxamide: step 1/1. This is Bifunctional purine biosynthesis protein PurH from Prosthecochloris aestuarii (strain DSM 271 / SK 413).